Here is a 325-residue protein sequence, read N- to C-terminus: Glutarate 2-hydroxylase (325 aa).

Fe cation is bound by residues histidine 160, aspartate 162, and histidine 292.

This sequence belongs to the glutarate hydroxylase family. In terms of assembly, homotetramer. Fe(2+) is required as a cofactor.

The catalysed reaction is glutarate + 2-oxoglutarate + O2 = (S)-2-hydroxyglutarate + succinate + CO2. It participates in amino-acid degradation. Its function is as follows. Acts as an alpha-ketoglutarate-dependent dioxygenase catalyzing hydroxylation of glutarate (GA) to L-2-hydroxyglutarate (L2HG). Functions in a L-lysine degradation pathway that proceeds via cadaverine, glutarate and L-2-hydroxyglutarate. The sequence is that of Glutarate 2-hydroxylase from Escherichia fergusonii (strain ATCC 35469 / DSM 13698 / CCUG 18766 / IAM 14443 / JCM 21226 / LMG 7866 / NBRC 102419 / NCTC 12128 / CDC 0568-73).